The following is a 222-amino-acid chain: MSEKTHWNRREMAEKGFTFVFPYSEGLKRVRELLNTDYDPAVLWVWGTMQARAVIETLKACESDFGEKGQKVVYEALKKVGREVAEQMISSSKFEGMDEAELLSFFATIVNTIAYASIEKPWVESEERVGFDILWCPHQDVYSAFDCRVQRYFVQGMLEALREKYEKETGKKLKWQVKFETTIPAGADVCRFVIWRSESEDNEWEKYTELLNRKALNGKNIL.

This is an uncharacterized protein from Archaeoglobus fulgidus (strain ATCC 49558 / DSM 4304 / JCM 9628 / NBRC 100126 / VC-16).